The sequence spans 272 residues: Ribosome maturation factor RimP (272 aa).

Positions 209 to 272 are disordered; the sequence is QNLGILPPPP…RGDIDPPEGD (64 aa). A compositionally biased stretch (basic and acidic residues) spans 250 to 266; it reads NTKEHRLAAERLRRGDI.

This sequence belongs to the RimP family.

It localises to the cytoplasm. In terms of biological role, required for maturation of 30S ribosomal subunits. The polypeptide is Ribosome maturation factor RimP (Rhodopseudomonas palustris (strain BisA53)).